The chain runs to 572 residues: Proteinaceous RNase P 1, chloroplastic/mitochondrial (572 aa).

A chloroplast and mitochondrion-targeting transit peptide spans 1 to 70 (MLRLTCFTPS…SRHLCTLPLA (70 aa)). PPR repeat units follow at residues 96-130 (PEALLKQKLDMCSKKGDVLEALRLYDEARRNGVQL), 136-174 (NVLLYVCSLAEAATESSPNPGLSRGFDIFKQMIVDKVVP), 175-209 (NEATFTNGARLAVAKDDPEMAFDMVKQMKAFGIQP), and 210-244 (RLRSYGPALFGFCRKGDADKAYEVDAHMVESEVVP). The region spanning 338–565 (MDENGVCKCC…DLQTSRQWLC (228 aa)) is the PRORP domain. Residues cysteine 344 and cysteine 347 each coordinate Zn(2+). Mn(2+) is bound by residues aspartate 399, aspartate 474, aspartate 475, and aspartate 493. Zn(2+)-binding residues include histidine 548 and cysteine 565.

The protein belongs to the PPR family. P subfamily. Mg(2+) serves as cofactor. Requires Mn(2+) as cofactor.

The protein localises to the mitochondrion. Its subcellular location is the plastid. It is found in the chloroplast. The enzyme catalyses Endonucleolytic cleavage of RNA, removing 5'-extranucleotides from tRNA precursor.. In terms of biological role, endonuclease RNase P responsible for the 5' maturation of tRNA precursors. Preferentially cleaves at the unusual cleavage site, but also able to cleave at the classical cleavage site. Also involved in the maturation of mRNAs in mitochondria. The polypeptide is Proteinaceous RNase P 1, chloroplastic/mitochondrial (PRORP1) (Arabidopsis thaliana (Mouse-ear cress)).